A 446-amino-acid chain; its full sequence is MTNMTQASATEKKGASDLLRFKIFGMPLPLYAFALITLLLSHFYNAIPTDLVGGFALMFVMGAIFGEIGKRLPIFNKYIGGAPVMIFLVAAYFVYAGIFTQKEIDAISNVMDKSNFLNLFIAVLITGAILSVNRKLLLKSLLGYIPTILAGIVGASLFGIVIGLCFGIPVDRIMMLYVLPIMGGGNGAGAVPLSEIYHSVTGRSREEYYSTAIAILTIANIFAIIFAALLDMIGKKYTWLSGEGELVRKASFKTEDDEKAGQITHRETAVGMVLSTTCFLLAYVVAKKILPSIGGVSIHYFAWMVLIVAALNASGLCSPEIKAGAKRLSDFFSKQLLWVLMVGVGVCYTDLQEIIDALTFANVVIAAIIVVGAVVGAAIGGWLIGFYPIESSITAGLCMANRGGSGDLEVLSACNRMNLISYAQISSRLGGGIVLVIASIVFSMMV.

Transmembrane regions (helical) follow at residues 23 to 43 (IFGMPLPLYAFALITLLLSHF), 46 to 66 (AIPTDLVGGFALMFVMGAIFG), 79 to 99 (IGGAPVMIFLVAAYFVYAGIF), 110 to 130 (VMDKSNFLNLFIAVLITGAIL), and 148 to 168 (ILAGIVGASLFGIVIGLCFGI). Na(+) contacts are provided by I181 and G183. Positions 186 and 187 each coordinate citrate. 5 helical membrane passes run 213–233 (IAILTIANIFAIIFAALLDMI), 267–287 (ETAVGMVLSTTCFLLAYVVAK), 289–309 (ILPSIGGVSIHYFAWMVLIVA), 335–355 (QLLWVLMVGVGVCYTDLQEII), and 364–384 (VIAAIIVVGAVVGAAIGGWLI). Na(+) is bound by residues M399 and N401. Citrate-binding residues include R402, G404, S405, and R428. A helical transmembrane segment spans residues 425 to 445 (ISSRLGGGIVLVIASIVFSMM).

This sequence belongs to the 2-hydroxycarboxylate transporter (2-HCT) (TC 2.A.24) family. Homodimer.

It is found in the cell inner membrane. The enzyme catalyses citrate(out) + 2 Na(+)(out) = citrate(in) + 2 Na(+)(in). In terms of biological role, secondary active transporter that catalyzes the uptake of citrate across the membrane with the concomitant uptake of sodium. Is specific for citrate. The protein is Citrate/sodium symporter of Salmonella pullorum.